The sequence spans 428 residues: D-amino acid dehydrogenase (428 aa).

3 to 17 (VVILGSGVVGVASAY) provides a ligand contact to FAD.

This sequence belongs to the DadA oxidoreductase family. It depends on FAD as a cofactor.

It catalyses the reaction a D-alpha-amino acid + A + H2O = a 2-oxocarboxylate + AH2 + NH4(+). The protein operates within amino-acid degradation; D-alanine degradation; NH(3) and pyruvate from D-alanine: step 1/1. Its function is as follows. Oxidative deamination of D-amino acids. The protein is D-amino acid dehydrogenase of Burkholderia cenocepacia (strain HI2424).